We begin with the raw amino-acid sequence, 245 residues long: Isopentenyl phosphate kinase (245 aa).

Residue Lys-5–Ser-9 participates in ATP binding. Substrate is bound at residue Gly-45. Gly-46 is an ATP binding site. His-50 and Gly-143 together coordinate substrate. ATP is bound by residues Asp-164, Tyr-169–Lys-174, Gly-201, and Lys-205.

This sequence belongs to the isopentenyl phosphate kinase family. In terms of assembly, homodimer.

The enzyme catalyses isopentenyl phosphate + ATP = isopentenyl diphosphate + ADP. Its function is as follows. Catalyzes the formation of isopentenyl diphosphate (IPP), the building block of all isoprenoids. Has lower activity with isopentenyl thiolophosphate (ISP). Has low activity with dimethylallyl phosphate (DMAP), 1-butyl phosphate (BP) and 3-buten-1-yl phosphate (BEP). Has no significant activity with geranyl phosphate (in vitro). This is Isopentenyl phosphate kinase from Thermoplasma acidophilum (strain ATCC 25905 / DSM 1728 / JCM 9062 / NBRC 15155 / AMRC-C165).